The following is a 396-amino-acid chain: Purine ribonucleoside efflux pump NepI (396 aa).

The Cytoplasmic segment spans residues 1-21 (MSEFIAENRGADAITRPNWSA). Residues 22-42 (VFSVAFCVACLIIVEFLPVSL) traverse the membrane as a helical segment. Residues 43-54 (LTPMAQDLGISE) lie on the Periplasmic side of the membrane. A helical transmembrane segment spans residues 55–75 (GVAGQSVTVTAFVAMFASLFI). Topologically, residues 76 to 85 (TQTIQATDRR) are cytoplasmic. Residues 86 to 106 (YVVILFAVLLTLSCLLVSFAN) form a helical membrane-spanning segment. Position 107 (serine 107) is a topological domain, periplasmic. Residues 108-128 (FSLLLIGRACLGLALGGFWAM) traverse the membrane as a helical segment. Topologically, residues 129–147 (SASLTMRLVPPRTVPKALS) are cytoplasmic. The helical transmembrane segment at 148 to 168 (VIFGAVSIALVIAAPLGCFLG) threads the bilayer. The Periplasmic portion of the chain corresponds to 169-175 (ELIGWRN). The helical transmembrane segment at 176–196 (VFNAAAAMGVLCIFWIIKSLP) threads the bilayer. Residues 197-215 (SLPGEPSHQKQNTFRLLQR) lie on the Cytoplasmic side of the membrane. The chain crosses the membrane as a helical span at residues 216 to 236 (PGVMAGMIAIFMSFAGQFAFF). Residues 237–255 (TYIRPVYMTLAGFGVDGLT) are Periplasmic-facing. Residues 256 to 276 (LVLLSFGIASFVGTSLSSFIL) form a helical membrane-spanning segment. At 277–281 (KRSVK) the chain is on the cytoplasmic side. A helical membrane pass occupies residues 282–302 (LALAGAPFVLALSALVLTLWG). At 303–305 (SDK) the chain is on the periplasmic side. The helical transmembrane segment at 306–326 (IVATGVAIIWGLTFALIPVGW) threads the bilayer. The Cytoplasmic portion of the chain corresponds to 327 to 343 (STWITRSLADQAEKAGS). A helical membrane pass occupies residues 344-364 (IQVAVIQLANTCGAAIGGYAL). Topologically, residues 365–366 (DN) are periplasmic. A helical transmembrane segment spans residues 367–387 (IGLTSPLMLSGTLMLLTALLV). Residues 388 to 396 (TAKVKMKKS) lie on the Cytoplasmic side of the membrane.

This sequence belongs to the major facilitator superfamily. DHA1 family. NepI (TC 2.A.1.2.26) subfamily.

It is found in the cell inner membrane. The enzyme catalyses inosine(in) + H(+)(out) = inosine(out) + H(+)(in). It carries out the reaction guanosine(in) + H(+)(out) = guanosine(out) + H(+)(in). In terms of biological role, involved in the efflux of purine ribonucleosides, such as inosine and guanosine. The polypeptide is Purine ribonucleoside efflux pump NepI (Escherichia coli O157:H7).